Consider the following 463-residue polypeptide: Chromosomal replication initiator protein DnaA (463 aa).

Residues 1 to 83 form a domain I, interacts with DnaA modulators region; the sequence is MSTNQIILTD…LQLFQHYNNT (83 aa). Positions 83–124 are domain II; the sequence is TIKSVEIITKELPGTSKTVIELPTKTFADIGSSELNAENIFS. A domain III, AAA+ region region spans residues 125-343; it reads TLDVRFTFDN…GALNKVIAHS (219 aa). Gly-171, Gly-173, Lys-174, and Thr-175 together coordinate ATP. Residues 344 to 463 are domain IV, binds dsDNA; that stretch reads NFTLKEITLE…INLLMKILQN (120 aa).

It belongs to the DnaA family. As to quaternary structure, oligomerizes as a right-handed, spiral filament on DNA at oriC.

It is found in the cytoplasm. Functionally, plays an essential role in the initiation and regulation of chromosomal replication. ATP-DnaA binds to the origin of replication (oriC) to initiate formation of the DNA replication initiation complex once per cell cycle. Binds the DnaA box (a 9 base pair repeat at the origin) and separates the double-stranded (ds)DNA. Forms a right-handed helical filament on oriC DNA; dsDNA binds to the exterior of the filament while single-stranded (ss)DNA is stabiized in the filament's interior. The ATP-DnaA-oriC complex binds and stabilizes one strand of the AT-rich DNA unwinding element (DUE), permitting loading of DNA polymerase. After initiation quickly degrades to an ADP-DnaA complex that is not apt for DNA replication. Binds acidic phospholipids. The polypeptide is Chromosomal replication initiator protein DnaA (Rickettsia canadensis (strain McKiel)).